The primary structure comprises 634 residues: MDLWQLLLTLAVAGSSDAFSGSEATPAFLVRASQSLQILYPVLETNSSGNPKFTKCRSPELETFSCHWTDGANHSLQSPGSVQMFYIRRDIQEWKECPDYVSAGENSCYFNSSYTSVWTPYCIKLTSNGGIVDHKCFSVEDIVQPDPPVGLNWTLLNISLTEIHADILVKWEPPPNTDVKMGWIILEYELHYKELNETQWKMMDPLMVTSVPMYSLRLDKEYEVRVRTRQRNTEKYGKFSEVLLITFPQMNPSACEEDFQFPWFLIIIFGILGLAVTLYLLIFSKQQRIKMLILPPVPVPKIKGIDPDLLKEGKLEEVNTILAIHDNYKHEFYNDDSWVEFIELDIDDPDEKTEGSDTDRLLSNDHEKSLNIFGAKDDDSGRTSCYEPDILEADFHVSDMCDGTSEVAQPQRLKGEADISCLDQKNQNNSPSNDAAPASQQPSVILVEENKPRPLLIGGTESTHQAVHTQLSNPSSLANIDFYAQVSDITPAGNVVLSPGQKNKTGNPQCDTHPEVVTPCQANFIVDNAYFCEVDAKKYIALAPHVEAESHVEPSFNQEDIYITTESLTTTAGRSGTAEHVPSSEIPVPDYTSIHIVQSPQGLVLNATALPLPDKEFLSSCGYVSTDQLNKIMP.

The N-terminal stretch at 1–18 (MDLWQLLLTLAVAGSSDA) is a signal peptide. Topologically, residues 19–260 (FSGSEATPAF…NPSACEEDFQ (242 aa)) are extracellular. N-linked (GlcNAc...) asparagine glycosylation is present at N46. C56 and C66 are joined by a disulfide. N73 carries N-linked (GlcNAc...) asparagine glycosylation. C97 and C108 are joined by a disulfide. N-linked (GlcNAc...) asparagine glycosylation is present at N111. A disulfide bridge links C122 with C136. Residues 147–250 (PPVGLNWTLL…EVLLITFPQM (104 aa)) form the Fibronectin type-III domain. 3 N-linked (GlcNAc...) asparagine glycosylation sites follow: N152, N157, and N196. Positions 236–240 (YGKFS) match the WSXWS motif motif. A helical transmembrane segment spans residues 261-284 (FPWFLIIIFGILGLAVTLYLLIFS). Residues 285–634 (KQQRIKMLIL…STDQLNKIMP (350 aa)) are Cytoplasmic-facing. Residues 290-375 (KMLILPPVPV…HEKSLNIFGA (86 aa)) form a required for JAK2 binding region. The Box 1 motif motif lies at 293-301 (ILPPVPVPK). Positions 336–345 (DSWVEFIELD) match the UbE motif motif. S337 is modified (phosphoserine).

It belongs to the type I cytokine receptor family. Type 1 subfamily. In terms of assembly, on growth hormone (GH) binding, forms homodimers and binds JAK2 via a box 1-containing domain. The soluble form (GHBP) is produced by phorbol ester-promoted proteolytic cleavage at the cell surface (shedding) by ADAM17/TACE. Shedding is inhibited by growth hormone (GH) binding to the receptor probably due to a conformational change in GHR rendering the receptor inaccessible to ADAM17. Post-translationally, on GH binding, phosphorylated on tyrosine residues in the cytoplasmic domain by JAK2. In terms of processing, ubiquitinated by the ECS(SOCS2) complex following ligand-binding and phosphorylation by JAK2, leading to its degradation by the proteasome. Regulation by the ECS(SOCS2) complex acts as a negative feedback loop of growth hormone receptor signaling. Ubiquitination is not sufficient for GHR internalization.

The protein resides in the cell membrane. It is found in the secreted. Receptor for pituitary gland growth hormone (GH1) involved in regulating postnatal body growth. On ligand binding, couples to the JAK2/STAT5 pathway. In terms of biological role, the soluble form (GHBP) acts as a reservoir of growth hormone in plasma and may be a modulator/inhibitor of GH signaling. This is Growth hormone receptor (GHR) from Bos taurus (Bovine).